Reading from the N-terminus, the 94-residue chain is ESAT-6-like protein EsxI (94 aa).

This sequence belongs to the WXG100 family. ESAT-6 subfamily.

The protein resides in the secreted. The polypeptide is ESAT-6-like protein EsxI (Mycobacterium tuberculosis (strain ATCC 25618 / H37Rv)).